Here is a 249-residue protein sequence, read N- to C-terminus: Triosephosphate isomerase (249 aa).

8 to 10 lines the substrate pocket; it reads NWK. H95 functions as the Electrophile in the catalytic mechanism. E166 acts as the Proton acceptor in catalysis. Substrate is bound by residues G172, S211, and 232 to 233; that span reads GG.

Belongs to the triosephosphate isomerase family. Homodimer.

The protein localises to the cytoplasm. It catalyses the reaction D-glyceraldehyde 3-phosphate = dihydroxyacetone phosphate. Its pathway is carbohydrate biosynthesis; gluconeogenesis. It participates in carbohydrate degradation; glycolysis; D-glyceraldehyde 3-phosphate from glycerone phosphate: step 1/1. Its function is as follows. Involved in the gluconeogenesis. Catalyzes stereospecifically the conversion of dihydroxyacetone phosphate (DHAP) to D-glyceraldehyde-3-phosphate (G3P). The chain is Triosephosphate isomerase from Granulibacter bethesdensis (strain ATCC BAA-1260 / CGDNIH1).